Here is a 342-residue protein sequence, read N- to C-terminus: Eukaryotic translation initiation factor 3 subunit F (342 aa).

In terms of domain architecture, MPN spans Val-30–Gly-166. Residues Thr-310–Ala-342 form a disordered region. The segment covering Gly-317 to Arg-331 has biased composition (basic and acidic residues).

Belongs to the eIF-3 subunit F family. As to quaternary structure, component of the eukaryotic translation initiation factor 3 (eIF-3) complex.

The protein resides in the cytoplasm. Its function is as follows. Component of the eukaryotic translation initiation factor 3 (eIF-3) complex, which is involved in protein synthesis of a specialized repertoire of mRNAs and, together with other initiation factors, stimulates binding of mRNA and methionyl-tRNAi to the 40S ribosome. The eIF-3 complex specifically targets and initiates translation of a subset of mRNAs involved in cell proliferation. This chain is Eukaryotic translation initiation factor 3 subunit F, found in Phaeosphaeria nodorum (strain SN15 / ATCC MYA-4574 / FGSC 10173) (Glume blotch fungus).